The sequence spans 408 residues: Bifunctional polynucleotide phosphatase/kinase (408 aa).

Residues 1–38 (MSSKKRKSPPQESLTSYFEKSSKSSKKYGSQNKDSDSS) are disordered. A Phosphoserine modification is found at Ser8. Composition is skewed to polar residues over residues 10-19 (PQESLTSYFE) and 28-38 (YGSQNKDSDSS). Residue 263–270 (GFPSSGKS) coordinates ATP.

This sequence in the N-terminal section; belongs to the DNA 3' phosphatase family.

Its subcellular location is the nucleus. It carries out the reaction a 3'end (2'-deoxyribonucleotide 3'-phosphate)-DNA + H2O = a 3'-end 2'-deoxyribonucleotide-DNA + phosphate. The catalysed reaction is a 5'-end dephospho-2'-deoxyribonucleoside-DNA + ATP = a 5'-end 5'-phospho-2'-deoxyribonucleoside-DNA + ADP + H(+). In terms of biological role, catalyzes the phosphorylation of DNA at 5'-hydroxyl termini and can dephosphorylate its 3'-phosphate termini. Has a role in the repair of breaks in single-stranded DNA. This Schizosaccharomyces pombe (strain 972 / ATCC 24843) (Fission yeast) protein is Bifunctional polynucleotide phosphatase/kinase (pnk1).